The chain runs to 187 residues: Adenine phosphoribosyltransferase (187 aa).

It belongs to the purine/pyrimidine phosphoribosyltransferase family. As to quaternary structure, homodimer.

The protein resides in the cytoplasm. It catalyses the reaction AMP + diphosphate = 5-phospho-alpha-D-ribose 1-diphosphate + adenine. It participates in purine metabolism; AMP biosynthesis via salvage pathway; AMP from adenine: step 1/1. Functionally, catalyzes a salvage reaction resulting in the formation of AMP, that is energically less costly than de novo synthesis. The chain is Adenine phosphoribosyltransferase from Burkholderia pseudomallei (strain 668).